We begin with the raw amino-acid sequence, 235 residues long: V-type proton ATPase subunit E2 (235 aa).

N-acetylmethionine is present on Met1. Positions 8-64 (KQIQQMVRFIRQEAEEKANEISISAEEEFNIERLQLLESAKRKLRQDYDRKLKQVDI) form a coiled coil.

It belongs to the V-ATPase E subunit family. In terms of assembly, V-ATPase is a heteromultimeric enzyme composed of a peripheral catalytic V1 complex (components A to H) attached to an integral membrane V0 proton pore complex (components: a, c, c'', d and e).

It is found in the vacuole membrane. Subunit of the peripheral V1 complex of vacuolar ATPase essential for assembly or catalytic function. V-ATPase is responsible for acidifying a variety of intracellular compartments in eukaryotic cells. The polypeptide is V-type proton ATPase subunit E2 (VHA-E2) (Arabidopsis thaliana (Mouse-ear cress)).